The primary structure comprises 161 residues: Nucleotide-binding protein Geob_0921 (161 aa).

The protein belongs to the YajQ family.

Functionally, nucleotide-binding protein. The polypeptide is Nucleotide-binding protein Geob_0921 (Geotalea daltonii (strain DSM 22248 / JCM 15807 / FRC-32) (Geobacter daltonii)).